The following is a 76-amino-acid chain: Kappa-actitoxin-Avd4l (76 aa).

Residues 1 to 19 form the signal peptide; sequence MNKALFLCLVVLCAAVVFA. A propeptide spanning residues 20–31 is cleaved from the precursor; sequence AEDLQKAKHAPF. 3 disulfides stabilise this stretch: Cys-37/Cys-72, Cys-39/Cys-65, and Cys-55/Cys-73.

Belongs to the sea anemone type 3 (BDS) potassium channel toxin family. Weakly expressed in the ectodermal tissue from the distal and proximal tentacles, body wall, and oral disk.

The protein localises to the secreted. It localises to the nematocyst. Functionally, blocks Kv3 voltage-gated potassium channels. Reduces blood pressure. This Anemonia viridis (Snakelocks anemone) protein is Kappa-actitoxin-Avd4l.